The following is a 489-amino-acid chain: Ketol-acid reductoisomerase (NADP(+)) (489 aa).

A KARI N-terminal Rossmann domain is found at 16–207 (IKKCRFMEKK…GGHRAGVLES (192 aa)). NADP(+) is bound by residues 44–47 (CGSQ), arginine 67, serine 77, and 107–109 (DKQ). Histidine 131 is an active-site residue. Glycine 157 contacts NADP(+). KARI C-terminal knotted domains lie at 208-343 (SFVA…QSPD) and 344-483 (YDKK…MKNM). The Mg(2+) site is built by aspartate 216, glutamate 220, glutamate 388, and glutamate 392. Substrate is bound at residue serine 413.

Belongs to the ketol-acid reductoisomerase family. It depends on Mg(2+) as a cofactor.

It carries out the reaction (2R)-2,3-dihydroxy-3-methylbutanoate + NADP(+) = (2S)-2-acetolactate + NADPH + H(+). The catalysed reaction is (2R,3R)-2,3-dihydroxy-3-methylpentanoate + NADP(+) = (S)-2-ethyl-2-hydroxy-3-oxobutanoate + NADPH + H(+). The protein operates within amino-acid biosynthesis; L-isoleucine biosynthesis; L-isoleucine from 2-oxobutanoate: step 2/4. Its pathway is amino-acid biosynthesis; L-valine biosynthesis; L-valine from pyruvate: step 2/4. Involved in the biosynthesis of branched-chain amino acids (BCAA). Catalyzes an alkyl-migration followed by a ketol-acid reduction of (S)-2-acetolactate (S2AL) to yield (R)-2,3-dihydroxy-isovalerate. In the isomerase reaction, S2AL is rearranged via a Mg-dependent methyl migration to produce 3-hydroxy-3-methyl-2-ketobutyrate (HMKB). In the reductase reaction, this 2-ketoacid undergoes a metal-dependent reduction by NADPH to yield (R)-2,3-dihydroxy-isovalerate. The chain is Ketol-acid reductoisomerase (NADP(+)) from Buchnera aphidicola subsp. Diuraphis noxia.